The following is a 615-amino-acid chain: MPIQVLPPQLANQIAAGEVVERPASVVKELVENSLDAGATRIDIDIERGGAKLIRIRDNGCGIKKDELALALARHATSKIASLDDLEAIISLGFRGEALASISSVSRLTLTSRTAEQQEAWQAYAEGRDMDVTVKPAAHPVGTTLEVLDLFYNTPARRKFLRTEKTEFNHIDEIIRRIALARFDVTINLSHNGKIVRQYRAVPEGGQKERRLGAICGTAFLEQALAIEWQHGDLTLRGWVADPNHTTPALAEIQYCYVNGRMMRDRLINHAIRQACEDKLGADQQPAFVLYLEIDPHQVDVNVHPAKHEVRFHQSRLVHDFIYQGVLSVLQQQLETPLPLDDEPQPAPRAIPENRVAAGRNHFAEPAVREPVAPRYSPAPASGSRPAASWPNAQPGYQKQQGEVYRQLLQTPAPMQKPKAPEPQEPALAANSQSFGRVLTIVHSDCALLERDGNISLLSLPVAERWLRQAQLTPGEVPVCAQPLLIPLRLKVSGEEKSALEKAQSALAELGIDFQSDAQHVTIRAVPLPLRQQNLQILIPELIGYLAKQSVFEPGNIAQWIARNLMSEHAQWSMAQAITLLADVERLCPQLVKTPPGGLLQSVDLHPAIKALKDE.

The tract at residues 362-397 (HFAEPAVREPVAPRYSPAPASGSRPAASWPNAQPGY) is disordered. Over residues 373–391 (APRYSPAPASGSRPAASWP) the composition is skewed to low complexity.

The protein belongs to the DNA mismatch repair MutL/HexB family.

In terms of biological role, this protein is involved in the repair of mismatches in DNA. It is required for dam-dependent methyl-directed DNA mismatch repair. May act as a 'molecular matchmaker', a protein that promotes the formation of a stable complex between two or more DNA-binding proteins in an ATP-dependent manner without itself being part of a final effector complex. This is DNA mismatch repair protein MutL from Escherichia coli O6:H1 (strain CFT073 / ATCC 700928 / UPEC).